We begin with the raw amino-acid sequence, 260 residues long: Zinc finger protein 575 (260 aa).

The interval 22-81 (PGLGPGRWLLPGAHQPSCPPAPHQGPLQKPSQSAPGPTASASAPPRPRRRPPPQRPHRCP) is disordered. A compositionally biased stretch (low complexity) spans 51 to 64 (PSQSAPGPTASASA). Residues 67 to 78 (RPRRRPPPQRPH) show a composition bias toward basic residues. C2H2-type zinc fingers lie at residues 78-100 (HRCP…RLAH), 106-128 (HPCP…RLTH), 134-156 (HPCP…LWTH), 162-184 (YPCP…RHTH), 192-214 (YPCP…RLCH), and 228-255 (HRCS…QVEH).

Belongs to the krueppel C2H2-type zinc-finger protein family.

It is found in the nucleus. In terms of biological role, may be involved in transcriptional regulation. The protein is Zinc finger protein 575 (ZNF575) of Macaca fascicularis (Crab-eating macaque).